The following is a 270-amino-acid chain: Oxidoreductase claK (270 aa).

This sequence belongs to the avfA family.

The protein operates within pigment biosynthesis. Functionally, oxidoreductase; part of the gene cluster that mediates the biosynthesis of the bianthraquinone cladofulvin, a conidial pigment not required for virulence but that plays a role in fitness and resistance to environmental stresses including UV light and low-temperature stress. The pathway begins with the synthesis of atrochrysone thioester by the polyketide synthase (PKS) claG. The atrochrysone carboxyl ACP thioesterase claF then breaks the thioester bond and releases the atrochrysone carboxylic acid from claG. This compound is decarboxylated by claH to yield emodin, which is further converted to chrysophanol hydroquinone by the reductase claC and the dehydratase claB. The cytochrome monooxygenase P450 claM then catalyzes the dimerization of nataloe-emodin to cladofulvin. The chain is Oxidoreductase claK from Passalora fulva (Tomato leaf mold).